We begin with the raw amino-acid sequence, 271 residues long: Tryptophan synthase alpha chain (271 aa).

Active-site proton acceptor residues include Glu49 and Asp60.

It belongs to the TrpA family. As to quaternary structure, tetramer of two alpha and two beta chains.

The catalysed reaction is (1S,2R)-1-C-(indol-3-yl)glycerol 3-phosphate + L-serine = D-glyceraldehyde 3-phosphate + L-tryptophan + H2O. It functions in the pathway amino-acid biosynthesis; L-tryptophan biosynthesis; L-tryptophan from chorismate: step 5/5. The alpha subunit is responsible for the aldol cleavage of indoleglycerol phosphate to indole and glyceraldehyde 3-phosphate. The protein is Tryptophan synthase alpha chain of Azoarcus sp. (strain BH72).